We begin with the raw amino-acid sequence, 451 residues long: Cysteine desulfurase (451 aa).

Ala121, Thr122, Gln229, Ser249, and His251 together coordinate pyridoxal 5'-phosphate. Lys252 is modified (N6-(pyridoxal phosphate)lysine). Thr289 contacts pyridoxal 5'-phosphate. Residue Cys375 is the Cysteine persulfide intermediate of the active site. Cys375 is a [2Fe-2S] cluster binding site. Residue Cys375 coordinates Zn(2+). Cys375 is modified (cysteine persulfide).

It belongs to the class-V pyridoxal-phosphate-dependent aminotransferase family. NifS/IscS subfamily. As to quaternary structure, homodimer. Component of the mitochondrial core iron-sulfur cluster (ISC) complex composed of NFS1, LYRM4, NDUFAB1, ISCU, FXN, and FDX2; this complex is a heterohexamer containing two copies of each monomer. Component of cyteine desulfurase complex composed of NFS1, LYRM4 and NDUFAB1; this complex contributes to the activation of cysteine desulfurase activity and NFS1 stabilization. Interacts (homodimer form) with ISCU (D-state); each monomer interacts with the C-terminal regions of each NFS1 monomer. Interacts with HSPA9. Interacts (via homodimer form) with FDX2. Interacts (via homodimer form) with FXN. Interacts with LYRM4. Component of a complex composed of FXN, NFS1, LYRM4 and ISCU. In terms of assembly, monomer. Homodimer. Oligomer. Interacts with ISCU. Component of the cysteine desulfurase complex composed of NFS1 and LYRM4; this complex contributes to the activation of cysteine desulfurase activity. Interacts with MOCS3. Pyridoxal 5'-phosphate is required as a cofactor. N-gluconoylated. Post-translationally, cysteine persulfide intermediate is reduced by thiol-containing molecules like glutathione and L-cysteine. Persulfide reduction is a rate-limiting step of cysteine desulfurase catalytic cycle.

The protein resides in the mitochondrion. It is found in the cytoplasm. It localises to the nucleus. The protein localises to the cytoskeleton. Its subcellular location is the microtubule organizing center. The protein resides in the centrosome. It catalyses the reaction (sulfur carrier)-H + L-cysteine = (sulfur carrier)-SH + L-alanine. It carries out the reaction L-cysteinyl-[cysteine desulfurase] + L-cysteine = S-sulfanyl-L-cysteinyl-[cysteine desulfurase] + L-alanine. Its activity is regulated as follows. Active only in complex with LYRM4. Functionally, cysteine desulfurase, of the core iron-sulfur cluster (ISC) assembly complex, that catalyzes the desulfuration of L-cysteine to L-alanine, as component of the cysteine desulfurase complex leading to the formation of a cysteine persulfide intermediate at the active site cysteine residue and participates in the [2Fe-2S] clusters assembly on the scaffolding protein ISCU. The persulfide is then transferred on the flexible Cys loop from the catalytic site of NFS1 to the surface of NFS1. After the NFS1-linked persulfide sulfur is transferred to one of the conserved Cys residues of the scaffold, a reaction assisted by FXN. The core iron-sulfur cluster (ISC) assembly complex is involved in the de novo synthesis of a [2Fe-2S] cluster, the first step of the mitochondrial iron-sulfur protein biogenesis. This process is initiated by the cysteine desulfurase complex (NFS1:LYRM4:NDUFAB1) that produces persulfide which is delivered on the scaffold protein ISCU in a FXN-dependent manner. Then this complex is stabilized by FDX2 which provides reducing equivalents to accomplish the [2Fe-2S] cluster assembly. Finally, the [2Fe-2S] cluster is transferred from ISCU to chaperone proteins, including HSCB, HSPA9 and GLRX5. In terms of biological role, may catalyze the desulfuration of L-cysteine to L-alanine as component of the cysteine desulfurase complex (NFS1:LYRM4), leading to the formation of a cysteine persulfide intermediate. Acts as a sulfur donor for MOCS3 by transferring the sulfur of the cysteine persulfide intermediate on MOCS3. The chain is Cysteine desulfurase from Rattus norvegicus (Rat).